A 160-amino-acid chain; its full sequence is Anaerobic nitrite reductase Glb1-1 (160 aa).

Residues 8–157 enclose the Globin domain; the sequence is GFTEEQEALV…LVNAIKSEMK (150 aa). The Homodimerization signature appears at 41–45; it reads EIAPS. Heme b-binding residues include Ser51, Lys65, His69, Lys99, and His104. The short motif at 111–123 is the Homodimerization element; sequence DEHFEVTKFALLE.

The protein belongs to the plant globin family. Homodimer. The cofactor is heme b.

The catalysed reaction is Fe(III)-heme b-[protein] + nitric oxide + H2O = Fe(II)-heme b-[protein] + nitrite + 2 H(+). Its function is as follows. Phytoglobin that reduces nitrite to nitric oxide (NO) under anoxic conditions (e.g. during flooding or in waterlogged soil) and upon root nodulation. Required for general plant development and during nodulation, especially for the onset of symbiosis. Monitors nitric oxide (NO) levels during early phase of the nitrogen-fixing symbiosis and buffers oxygen in functioning nodules. May not function as an oxygen storage or transport protein. Has an unusually high affinity for O(2) through a hexacoordinate heme iron because of a very low dissociation constant. The sequence is that of Anaerobic nitrite reductase Glb1-1 from Medicago truncatula (Barrel medic).